A 116-amino-acid polypeptide reads, in one-letter code: Protein Rev (116 aa).

2 positions are modified to phosphoserine; by host CK2: Ser5 and Ser8. The interval 18-26 (LIKFLYQSN) is homomultimerization. The interval 23–48 (YQSNPPPNPEGTRQARRNRRRRWRER) is disordered. Residues 34–50 (TRQARRNRRRRWRERQR) carry the Nuclear localization signal and RNA-binding (RRE) motif. Residues 36 to 48 (QARRNRRRRWRER) show a composition bias toward basic residues. Residues 73–84 (LQLPPLERLNLD) carry the Nuclear export signal and binding to XPO1 motif. A disordered region spans residues 90-116 (GTSGTQGVGSPEILVESPAVLEPGTKE). Phosphoserine; by host is present on residues Ser92 and Ser99.

Belongs to the HIV-1 REV protein family. Homomultimer; when bound to the RRE. Multimeric assembly is essential for activity and may involve XPO1. Binds to human KPNB1, XPO1, TNPO1, RANBP5 and IPO7. Interacts with the viral Integrase. Interacts with human KHDRBS1. Interacts with human NAP1; this interaction decreases Rev multimerization and stimulates its activity. Interacts with human DEAD-box helicases DDX3 and DDX24; these interactions may serve for viral RNA export to the cytoplasm and packaging, respectively. Interacts with human PSIP1; this interaction may inhibit HIV-1 DNA integration by promoting dissociation of the Integrase-LEDGF/p75 complex. In terms of processing, asymmetrically arginine dimethylated at one site by host PRMT6. Methylation impairs the RNA-binding activity and export of viral RNA from the nucleus to the cytoplasm. Phosphorylated by protein kinase CK2. Presence of, and maybe binding to the N-terminus of the regulatory beta subunit of CK2 is necessary for CK2-mediated Rev's phosphorylation.

It is found in the host nucleus. The protein localises to the host nucleolus. The protein resides in the host cytoplasm. Functionally, escorts unspliced or incompletely spliced viral pre-mRNAs (late transcripts) out of the nucleus of infected cells. These pre-mRNAs carry a recognition sequence called Rev responsive element (RRE) located in the env gene, that is not present in fully spliced viral mRNAs (early transcripts). This function is essential since most viral proteins are translated from unspliced or partially spliced pre-mRNAs which cannot exit the nucleus by the pathway used by fully processed cellular mRNAs. Rev itself is translated from a fully spliced mRNA that readily exits the nucleus. Rev's nuclear localization signal (NLS) binds directly to KPNB1/Importin beta-1 without previous binding to KPNA1/Importin alpha-1. KPNB1 binds to the GDP bound form of RAN (Ran-GDP) and targets Rev to the nucleus. In the nucleus, the conversion from Ran-GDP to Ran-GTP dissociates Rev from KPNB1 and allows Rev's binding to the RRE in viral pre-mRNAs. Rev multimerization on the RRE via cooperative assembly exposes its nuclear export signal (NES) to the surface. Rev can then form a complex with XPO1/CRM1 and Ran-GTP, leading to nuclear export of the complex. Conversion from Ran-GTP to Ran-GDP mediates dissociation of the Rev/RRE/XPO1/RAN complex, so that Rev can return to the nucleus for a subsequent round of export. Beside KPNB1, also seems to interact with TNPO1/Transportin-1, RANBP5/IPO5 and IPO7/RANBP7 for nuclear import. The nucleoporin-like HRB/RIP is an essential cofactor that probably indirectly interacts with Rev to release HIV RNAs from the perinuclear region to the cytoplasm. The polypeptide is Protein Rev (Human immunodeficiency virus type 1 group M subtype B (isolate OYI) (HIV-1)).